The primary structure comprises 460 residues: Mitochondrial distribution and morphology protein 10 (460 aa).

The protein belongs to the MDM10 family. In terms of assembly, component of the ER-mitochondria encounter structure (ERMES) or MDM complex, composed of MMM1, MDM10, MDM12 and MDM34. Associates with the mitochondrial outer membrane sorting assembly machinery SAM(core) complex.

The protein localises to the mitochondrion outer membrane. Component of the ERMES/MDM complex, which serves as a molecular tether to connect the endoplasmic reticulum and mitochondria. Components of this complex are involved in the control of mitochondrial shape and protein biogenesis and may function in phospholipid exchange. MDM10 is involved in the late assembly steps of the general translocase of the mitochondrial outer membrane (TOM complex). Functions in the TOM40-specific route of the assembly of outer membrane beta-barrel proteins, including the association of TOM40 with the receptor TOM22 and small TOM proteins. Can associate with the SAM(core) complex as well as the MDM12-MMM1 complex, both involved in late steps of the major beta-barrel assembly pathway, that is responsible for biogenesis of all outer membrane beta-barrel proteins. May act as a switch that shuttles between both complexes and channels precursor proteins into the TOM40-specific pathway. Plays a role in mitochondrial morphology and in the inheritance of mitochondria. The polypeptide is Mitochondrial distribution and morphology protein 10 (Candida glabrata (strain ATCC 2001 / BCRC 20586 / JCM 3761 / NBRC 0622 / NRRL Y-65 / CBS 138) (Yeast)).